We begin with the raw amino-acid sequence, 245 residues long: Phycocyanobilin:ferredoxin oxidoreductase (245 aa).

It belongs to the HY2 family.

It carries out the reaction (2R,3Z)-phycocyanobilin + 4 oxidized [2Fe-2S]-[ferredoxin] = biliverdin IXalpha + 4 reduced [2Fe-2S]-[ferredoxin] + 4 H(+). In terms of biological role, catalyzes the four-electron reduction of biliverdin IX-alpha (2-electron reduction at both the A and D rings); the reaction proceeds via an isolatable 2-electron intermediate, 181,182-dihydrobiliverdin. The protein is Phycocyanobilin:ferredoxin oxidoreductase of Rippkaea orientalis (strain PCC 8801 / RF-1) (Cyanothece sp. (strain PCC 8801)).